Reading from the N-terminus, the 880-residue chain is Tyrosine-protein kinase receptor TYRO3 (880 aa).

The first 28 residues, 1-28 (MVYPGPPGLIAGLLLAALSLSCVDGAKA), serve as a signal peptide directing secretion. Ig-like C2-type domains are found at residues 29 to 114 (LGFV…KSVS) and 125 to 206 (PYFT…AIVE). Topologically, residues 29–414 (LGFVGHGYNL…QRHPHTRMSW (386 aa)) are extracellular. Residues asparagine 37 and asparagine 49 are each glycosylated (N-linked (GlcNAc...) asparagine). Cysteine 50 and cysteine 103 are disulfide-bonded. The N-linked (GlcNAc...) asparagine glycan is linked to asparagine 143. Cysteine 146 and cysteine 189 are oxidised to a cystine. 2 Fibronectin type-III domains span residues 213–306 (PPFN…TKET) and 311–401 (LPQN…SKEE). 4 N-linked (GlcNAc...) asparagine glycosylation sites follow: asparagine 216, asparagine 279, asparagine 351, and asparagine 365. A helical membrane pass occupies residues 415-435 (VPMVLGILTALVTVVAMTLIF). The Cytoplasmic portion of the chain corresponds to 436-880 (LRKGRKETRF…MQEEQVVITL (445 aa)). The Protein kinase domain occupies 503 to 774 (FTLGRTLGKG…VDLKQRLEAI (272 aa)). ATP is bound by residues 509 to 517 (LGKGEFGSV) and lysine 535. Residue aspartate 640 is the Proton acceptor of the active site. Phosphotyrosine; by autocatalysis is present on tyrosine 671. The tract at residues 846-880 (EWSSSAQNGEARGLLHEEEEEEEEEMQEEQVVITL) is disordered. Acidic residues predominate over residues 862–873 (EEEEEEEEEMQE).

The protein belongs to the protein kinase superfamily. Tyr protein kinase family. AXL/UFO subfamily. In terms of processing, tyrosine phosphorylated upon receptor stimulation. In terms of tissue distribution, detected in brain, spinal cord, intestine, lung, stomach, ovary, testis, skin and eye.

It is found in the cell membrane. It carries out the reaction L-tyrosyl-[protein] + ATP = O-phospho-L-tyrosyl-[protein] + ADP + H(+). Functionally, may be involved in cell adhesion processes, particularly in the central nervous system. In Xenopus laevis (African clawed frog), this protein is Tyrosine-protein kinase receptor TYRO3 (tyro3).